The chain runs to 166 residues: Regulatory protein RecX (166 aa).

Belongs to the RecX family.

It localises to the cytoplasm. Modulates RecA activity. In Escherichia coli O139:H28 (strain E24377A / ETEC), this protein is Regulatory protein RecX.